Reading from the N-terminus, the 476-residue chain is Adenosylhomocysteinase (476 aa).

The substrate site is built by T61, D140, and E200. Residue 201-203 (TTT) coordinates NAD(+). Residues K230 and D234 each contribute to the substrate site. Residues N235, 264 to 269 (GYGDVG), E287, N322, 343 to 345 (IGH), and N389 each bind NAD(+).

The protein belongs to the adenosylhomocysteinase family. NAD(+) is required as a cofactor.

The protein resides in the cytoplasm. The catalysed reaction is S-adenosyl-L-homocysteine + H2O = L-homocysteine + adenosine. It functions in the pathway amino-acid biosynthesis; L-homocysteine biosynthesis; L-homocysteine from S-adenosyl-L-homocysteine: step 1/1. In terms of biological role, may play a key role in the regulation of the intracellular concentration of adenosylhomocysteine. The protein is Adenosylhomocysteinase of Acidovorax sp. (strain JS42).